Consider the following 117-residue polypeptide: Large ribosomal subunit protein uL18 (117 aa).

Belongs to the universal ribosomal protein uL18 family. In terms of assembly, part of the 50S ribosomal subunit; part of the 5S rRNA/L5/L18/L25 subcomplex. Contacts the 5S and 23S rRNAs.

This is one of the proteins that bind and probably mediate the attachment of the 5S RNA into the large ribosomal subunit, where it forms part of the central protuberance. This Colwellia psychrerythraea (strain 34H / ATCC BAA-681) (Vibrio psychroerythus) protein is Large ribosomal subunit protein uL18.